The primary structure comprises 249 residues: DNA repair protein RecO (249 aa).

The protein belongs to the RecO family.

Its function is as follows. Involved in DNA repair and RecF pathway recombination. The protein is DNA repair protein RecO of Polaromonas naphthalenivorans (strain CJ2).